The sequence spans 287 residues: Zinc transporter ZIP9 (287 aa).

Residues 4-24 (FLSISLLSLAMLVGCYVAGII) traverse the membrane as a helical segment. N29 is a glycosylation site (N-linked (GlcNAc...) asparagine). Helical transmembrane passes span 35–55 (LKLVTVLGAGLLCGTALAVIV), 107–127 (AYIGVSLVLGFVFMLLVDQIG), 147–167 (ITTTLGLVVHAAADGVALGAA), 177–197 (LIVFVAIMLHKAPAAFGLVSF), and 211–231 (HLLVFALAAPAMSMLTYLGLS). N242 carries an N-linked (GlcNAc...) asparagine glycan. Residues 245–265 (GVAMLFSAGTFLYVATVHVLP) form a helical membrane-spanning segment. The disordered stretch occupies residues 268–287 (TSTNQSGSSLSPRPLPSGKN). N271 is a glycosylation site (N-linked (GlcNAc...) asparagine). Positions 273–287 (SGSSLSPRPLPSGKN) are enriched in low complexity.

The protein belongs to the ZIP transporter (TC 2.A.5) family.

The protein localises to the golgi apparatus. It is found in the trans-Golgi network membrane. Its subcellular location is the cell membrane. It localises to the cytoplasm. The protein resides in the perinuclear region. The protein localises to the mitochondrion. It is found in the nucleus. It carries out the reaction Zn(2+)(in) = Zn(2+)(out). Functionally, transports zinc ions across cell and organelle membranes into the cytoplasm and regulates intracellular zinc homeostasis. Participates in the zinc ions efflux out of the secretory compartments. Regulates intracellular zinc level, resulting in the enhancement of AKT1 and MAPK3/MAPK1 (Erk1/2) phosphorylation in response to the BCR activation. Also functions as a membrane androgen receptor that mediates, through a G protein, the non-classical androgen signaling pathway, characterized by the activation of MAPK3/MAPK1 (Erk1/2) and transcription factors CREB1 or ATF1. This pathway contributes to CLDN1 and CLDN5 expression and tight junction formation between adjacent Sertoli cells. Mediates androgen-induced vascular endothelial cell proliferation through activation of an inhibitory G protein leading to the AKT1 and MAPK3/MAPK1 (Erk1/2) activation which in turn modulate inhibition (phosphorylation) of GSK3B and CCND1 transcription. Moreover, has dual functions as a membrane-bound androgen receptor and as an androgen-dependent zinc transporter both of which are mediated through an inhibitory G protein (Gi) that mediates both MAP kinase and zinc signaling leading to the androgen-dependent apoptotic process. The protein is Zinc transporter ZIP9 of Rattus norvegicus (Rat).